The following is a 234-amino-acid chain: Phosphoribosylaminoimidazole-succinocarboxamide synthase (234 aa).

The protein belongs to the SAICAR synthetase family.

The catalysed reaction is 5-amino-1-(5-phospho-D-ribosyl)imidazole-4-carboxylate + L-aspartate + ATP = (2S)-2-[5-amino-1-(5-phospho-beta-D-ribosyl)imidazole-4-carboxamido]succinate + ADP + phosphate + 2 H(+). The protein operates within purine metabolism; IMP biosynthesis via de novo pathway; 5-amino-1-(5-phospho-D-ribosyl)imidazole-4-carboxamide from 5-amino-1-(5-phospho-D-ribosyl)imidazole-4-carboxylate: step 1/2. In Streptococcus uberis (strain ATCC BAA-854 / 0140J), this protein is Phosphoribosylaminoimidazole-succinocarboxamide synthase.